Consider the following 240-residue polypeptide: UDP-2,3-diacylglucosamine hydrolase (240 aa).

Mn(2+) contacts are provided by Asp-8, His-10, Asp-41, Asn-79, and His-114. Residue 79–80 participates in substrate binding; the sequence is NR. Residues Asp-122, Ser-160, Asn-164, Lys-167, and His-195 each contribute to the substrate site. His-195 and His-197 together coordinate Mn(2+).

Belongs to the LpxH family. Mn(2+) is required as a cofactor.

It localises to the cell inner membrane. It catalyses the reaction UDP-2-N,3-O-bis[(3R)-3-hydroxytetradecanoyl]-alpha-D-glucosamine + H2O = 2-N,3-O-bis[(3R)-3-hydroxytetradecanoyl]-alpha-D-glucosaminyl 1-phosphate + UMP + 2 H(+). It participates in glycolipid biosynthesis; lipid IV(A) biosynthesis; lipid IV(A) from (3R)-3-hydroxytetradecanoyl-[acyl-carrier-protein] and UDP-N-acetyl-alpha-D-glucosamine: step 4/6. Hydrolyzes the pyrophosphate bond of UDP-2,3-diacylglucosamine to yield 2,3-diacylglucosamine 1-phosphate (lipid X) and UMP by catalyzing the attack of water at the alpha-P atom. Involved in the biosynthesis of lipid A, a phosphorylated glycolipid that anchors the lipopolysaccharide to the outer membrane of the cell. In Shigella sonnei (strain Ss046), this protein is UDP-2,3-diacylglucosamine hydrolase.